Here is a 243-residue protein sequence, read N- to C-terminus: Ubiquinone biosynthesis O-methyltransferase (243 aa).

R44, G64, D85, and M129 together coordinate S-adenosyl-L-methionine.

It belongs to the methyltransferase superfamily. UbiG/COQ3 family.

The catalysed reaction is a 3-demethylubiquinol + S-adenosyl-L-methionine = a ubiquinol + S-adenosyl-L-homocysteine + H(+). It carries out the reaction a 3-(all-trans-polyprenyl)benzene-1,2-diol + S-adenosyl-L-methionine = a 2-methoxy-6-(all-trans-polyprenyl)phenol + S-adenosyl-L-homocysteine + H(+). The protein operates within cofactor biosynthesis; ubiquinone biosynthesis. Its function is as follows. O-methyltransferase that catalyzes the 2 O-methylation steps in the ubiquinone biosynthetic pathway. In Erwinia tasmaniensis (strain DSM 17950 / CFBP 7177 / CIP 109463 / NCPPB 4357 / Et1/99), this protein is Ubiquinone biosynthesis O-methyltransferase.